A 407-amino-acid chain; its full sequence is MDGLPGRALGAACLLLLAAGWLGPEAWGSPTPPPSPAAPPPPPPPGALGGSQDTCTSCGGFRRPEELGRLDGDFLEAVKRHILNRLQMRGRPNITHAVPKAAMVTALRKLHAGKVREDGRVEIPHLDGHASPGADGQERVSEIISFAETDGLASSRVRLYFFISNEGNQNLFVVQASLWLYLKLLPYVLEKGSRRKVRVKVYFQEPGHGDRWDVVEKRVDLKRSGWHTLPLTEAIQALFERGERRLNLDVQCDGCQELAVVPVFVDPGEESHRPFVVVQARLVDSRHRIRKRGLECDGRTNLCCRQQFFIDFRLIGWSDWIIAPTGYYGNYCEGSCPAYLAGVPGSASSFHTAVVNQYRMRGLNPGTVNSCCIPTKLSTMSMLYFDDEYNIVKRDVPNMIVEECGCA.

The N-terminal stretch at M1–G28 is a signal peptide. The disordered stretch occupies residues W27–G60. A propeptide spanning residues S29–R292 is cleaved from the precursor. Over residues P30 to G46 the composition is skewed to pro residues. N-linked (GlcNAc...) asparagine glycosylation occurs at N93. 4 disulfides stabilise this stretch: C296-C304, C303-C372, C332-C404, and C336-C406.

The protein belongs to the TGF-beta family. Dimeric, linked by one or more disulfide bonds. Inhibin B is a dimer of alpha and beta-B. Activin B is a homodimer of beta-B. Activin AB is a dimer of beta-A and beta-B. Interacts with FST and FSTL3.

It localises to the secreted. In terms of biological role, inhibins and activins inhibit and activate, respectively, the secretion of follitropin by the pituitary gland. Inhibins/activins are involved in regulating a number of diverse functions such as hypothalamic and pituitary hormone secretion, gonadal hormone secretion, germ cell development and maturation, erythroid differentiation, insulin secretion, nerve cell survival, embryonic axial development or bone growth, depending on their subunit composition. Inhibins appear to oppose the functions of activins. Activin B is a dimer of alpha and beta-B that plays a role in several essential biological processes including embryonic development, stem cell maintenance and differentiation, haematopoiesis, cell proliferation and wound healing. Signals through type I receptor ACVR1C, abundantly expressed in pancreatic beta cells, and type II receptors like ACVR2A. Upon ligand binding, these receptors phosphorylate intracellular signaling mediators SMAD2 and SMAD3, which form a complex with SMAD4, translocate to the nucleus, and regulate gene expression. Plays a crucial role in the induction of hepcidin by inflammation through activation of ACVR1C and subsequent phosphorylation of SMAD1/5/8. Regulates adipocyte lipid metabolism by decreasing non-esterified fatty acids and glycerol release and increases intracellular triglyceride content. Stimulates wound healing by promoting cell migration and hair follicle regeneration through the JNK and ERK signaling pathways downstream of RHOA. Functionally, inhibin B is a dimer of alpha and beta-B that plays a crucial role in the regulation of the reproductive system by inhibiting the secretion of follicle-stimulating hormone (FSH) from the anterior pituitary gland. Thereby, maintains reproductive homeostasis in both males and females. Acts as a more potent suppressor of FSH release than inhibin A. Functions as competitive receptor antagonist binding activin type II receptors with high affinity in the presence of the TGF-beta type III coreceptor/TGFBR3L. The polypeptide is Inhibin beta B chain (INHBB) (Sus scrofa (Pig)).